Here is a 157-residue protein sequence, read N- to C-terminus: Peptide methionine sulfoxide reductase MsrA (157 aa).

The active site involves C10.

The protein belongs to the MsrA Met sulfoxide reductase family.

The catalysed reaction is L-methionyl-[protein] + [thioredoxin]-disulfide + H2O = L-methionyl-(S)-S-oxide-[protein] + [thioredoxin]-dithiol. It catalyses the reaction [thioredoxin]-disulfide + L-methionine + H2O = L-methionine (S)-S-oxide + [thioredoxin]-dithiol. Has an important function as a repair enzyme for proteins that have been inactivated by oxidation. Catalyzes the reversible oxidation-reduction of methionine sulfoxide in proteins to methionine. The chain is Peptide methionine sulfoxide reductase MsrA from Clostridium perfringens (strain 13 / Type A).